A 1755-amino-acid polypeptide reads, in one-letter code: Transposon Ty1-LR3 Gag-Pol polyprotein (1755 aa).

Positions 1-16 (MESQQLSQHSHISHGS) are enriched in low complexity. Disordered stretches follow at residues 1–93 (MESQ…MMTQ), 126–173 (PQSQ…RPPP), and 352–421 (GSRN…SKST). Polar residues-rich tracts occupy residues 48–60 (TKAN…TPAS) and 127–152 (QSQF…GNTF). Residues 153–165 (TDSSSADSDMTST) are compositionally biased toward low complexity. The interval 299–401 (NNGIHINNKV…NSKSKTARAH (103 aa)) is RNA-binding. Low complexity predominate over residues 402 to 418 (NVSTSNNSPSTDNDSIS). Phosphoserine is present on serine 416. Aspartate 461 (for protease activity; shared with dimeric partner) is an active-site residue. The tract at residues 583–640 (NVHTSESTRKYPYPFIHRMLAHANAQTIRYSLKNNTITYFNESDVDWSSAIDYQCPDC) is integrase-type zinc finger-like. The Integrase catalytic domain occupies 660 to 829 (NSYEPFQYLH…SQHAGLAGLD (170 aa)). Positions 671 and 736 each coordinate Mg(2+). Disordered stretches follow at residues 956–1087 (SKAV…ETEK), 1092–1111 (RSPS…NIVP), and 1129–1172 (ADLP…SNAY). Over residues 960-969 (SPTDSTPPST) the composition is skewed to low complexity. Positions 1005–1015 (STPQISNIEST) are enriched in polar residues. Positions 1038–1052 (ESSHASKSKDFRHSD) are enriched in basic and acidic residues. 2 stretches are compositionally biased toward polar residues: residues 1053–1082 (SYSN…QISD) and 1101–1111 (PENNSSHNIVP). The Bipartite nuclear localization signal motif lies at 1178-1212 (KKRSLEDNETEIKVSRDTWNTKNMRSLEPPRSKKR). One can recognise a Reverse transcriptase Ty1/copia-type domain in the interval 1338-1476 (NNYYITQLDI…DILGLEIKYQ (139 aa)). Mg(2+)-binding residues include aspartate 1346, aspartate 1427, aspartate 1428, aspartate 1610, glutamate 1652, and aspartate 1685. An RNase H Ty1/copia-type domain is found at 1610–1752 (DASYGNQPYY…IKTFKLLTNK (143 aa)).

In terms of assembly, the capsid protein forms a homotrimer, from which the VLPs are assembled. The protease is a homodimer, whose active site consists of two apposed aspartic acid residues. Initially, virus-like particles (VLPs) are composed of the structural unprocessed proteins Gag and Gag-Pol, and also contain the host initiator methionine tRNA (tRNA(i)-Met) which serves as a primer for minus-strand DNA synthesis, and a dimer of genomic Ty RNA. Processing of the polyproteins occurs within the particle and proceeds by an ordered pathway, called maturation. First, the protease (PR) is released by autocatalytic cleavage of the Gag-Pol polyprotein yielding capsid protein p45 and a Pol-p154 precursor protein. This cleavage is a prerequisite for subsequent processing of Pol-p154 at the remaining sites to release the mature structural and catalytic proteins. Maturation takes place prior to the RT reaction and is required to produce transposition-competent VLPs.

Its subcellular location is the cytoplasm. It localises to the nucleus. The catalysed reaction is DNA(n) + a 2'-deoxyribonucleoside 5'-triphosphate = DNA(n+1) + diphosphate. The enzyme catalyses Endonucleolytic cleavage to 5'-phosphomonoester.. In terms of biological role, capsid protein (CA) is the structural component of the virus-like particle (VLP), forming the shell that encapsulates the retrotransposons dimeric RNA genome. The particles are assembled from trimer-clustered units and there are holes in the capsid shells that allow for the diffusion of macromolecules. CA also has nucleocapsid-like chaperone activity, promoting primer tRNA(i)-Met annealing to the multipartite primer-binding site (PBS), dimerization of Ty1 RNA and initiation of reverse transcription. Its function is as follows. The aspartyl protease (PR) mediates the proteolytic cleavages of the Gag and Gag-Pol polyproteins after assembly of the VLP. Reverse transcriptase/ribonuclease H (RT) is a multifunctional enzyme that catalyzes the conversion of the retro-elements RNA genome into dsDNA within the VLP. The enzyme displays a DNA polymerase activity that can copy either DNA or RNA templates, and a ribonuclease H (RNase H) activity that cleaves the RNA strand of RNA-DNA heteroduplexes during plus-strand synthesis and hydrolyzes RNA primers. The conversion leads to a linear dsDNA copy of the retrotransposon that includes long terminal repeats (LTRs) at both ends. Functionally, integrase (IN) targets the VLP to the nucleus, where a subparticle preintegration complex (PIC) containing at least integrase and the newly synthesized dsDNA copy of the retrotransposon must transit the nuclear membrane. Once in the nucleus, integrase performs the integration of the dsDNA into the host genome. The chain is Transposon Ty1-LR3 Gag-Pol polyprotein (TY1B-LR3) from Saccharomyces cerevisiae (strain ATCC 204508 / S288c) (Baker's yeast).